Here is a 714-residue protein sequence, read N- to C-terminus: Polynucleotide 5'-hydroxyl-kinase NOL9 (714 aa).

Residue alanine 2 is modified to N-acetylalanine. Residues 31–47 carry the Nucleolar localization signal motif; it reads RRGRRRFGVLTRVELRR. A disordered region spans residues 80-133; that stretch reads ARSRPAPRSPPTPSVPPAPCTASATCSLLNPRNHSTPQSRAGRPVRKVSPNVTQ. A compositionally biased stretch (pro residues) spans 86 to 98; the sequence is PRSPPTPSVPPAP. The span at 107-118 shows a compositional bias: polar residues; the sequence is LLNPRNHSTPQS. Serine 128 carries the phosphoserine modification. Residue 322–329 participates in ATP binding; it reads GACDIGKS. The segment at 495–714 is interaction with LAS1L; sequence FTYEEKESSP…PRHKLRQRRK (220 aa). Lysine 500 is covalently cross-linked (Glycyl lysine isopeptide (Lys-Gly) (interchain with G-Cter in SUMO2)). Phosphoserine is present on serine 502.

Belongs to the Clp1 family. NOL9/GRC3 subfamily. Interacts with PELP1, WDR18 and SENP3. Interacts with LAS1L to form an ITS2 pre-rRNA endonuclease-kinase complex.

It localises to the nucleus. The protein localises to the nucleolus. It carries out the reaction a 5'-end dephospho-2'-deoxyribonucleoside-DNA + ATP = a 5'-end 5'-phospho-2'-deoxyribonucleoside-DNA + ADP + H(+). The catalysed reaction is a 5'-end dephospho-ribonucleoside-RNA + ATP = a 5'-end 5'-phospho-ribonucleoside-RNA + ADP + H(+). Polynucleotide kinase that can phosphorylate the 5'-hydroxyl groups of single-stranded and double-stranded RNA and DNA substrates. Involved in rRNA processing and its kinase activity is required for the processing of the 32S precursor into 5.8S and 28S rRNAs, more specifically for the generation of the major 5.8S(S) form. Required for the efficient pre-rRNA processing of internal transcribed spacer 2 (ITS2). Associates with LAS1L to form an ITS2 pre-rRNA endonuclease-kinase complex and is responsible for the transport of this complex into the nucleolus. The protein is Polynucleotide 5'-hydroxyl-kinase NOL9 of Mus musculus (Mouse).